We begin with the raw amino-acid sequence, 418 residues long: MSVAFAAPRQRGKGEITPAAIQKMLDDNNHLIQCIMDSQNKGKTSECSQYQQMLHTNLVYLATIADSNQNMQSLLPAPPTQNMPMGPGGMNQSGPPPPPRSHNMPSDGMVGGGPPAPHMQNQMNGQMPGPNHMPMQGPGPNQLNMTNSSMNMPSSSHGSMGGYNHSVPSSQSMPVQNQMTMSQGQPMGNYGPRPNMSMQPNQGPMMHQQPPSQQYNMPQGGGQHYQGQQPPMGMMGQVNQGNHMMGQRQIPPYRPPQQGPPQQYSGQEDYYGDQYSHGGQGPPEGMNQQYYPDGHNDYGYQQPSYPEQGYDRPYEDSSQHYYEGGNSQYGQQQDAYQGPPPQQGYPPQQQQYPGQQGYPGQQQGYGPSQGGPGPQYPNYPQGQGQQYGGYRPTQPGPPQPPQQRPYGYDQGQYGNYQQ.

N-acetylserine is present on Ser-2. The segment at Ser-2–Pro-186 is transcriptional activation. The SH2-binding signature appears at Tyr-50–Met-53. Disordered regions lie at residues Ala-77–His-118 and Gly-188–Gln-418. Residues Tyr-225–Pro-251 are compositionally biased toward low complexity. Over residues Gly-309–Ser-318 the composition is skewed to basic and acidic residues. 3 stretches are compositionally biased toward low complexity: residues Gln-328–Gln-337, Tyr-345–Gly-366, and Tyr-376–Thr-393. 2 repeat units span residues Gly-344–Gln-356 and Gly-357–Gln-369. Residues Gly-344–Gln-369 form a 2 X 13 AA imperfect tandem repeats region. The SH2-binding signature appears at Pro-374–Pro-377. An SH3-binding motif is present at residues Pro-392 to Pro-401. The segment covering Gln-394 to Gln-403 has biased composition (pro residues). Over residues Arg-404–Gln-418 the composition is skewed to low complexity. The SH2-binding signature appears at Tyr-413–Tyr-416.

It belongs to the SS18 family. Interacts with MLLT10. Isoform 1 interacts with RBM14 isoform 1. Isoform 2 interacts with RBM14 isoform 1. Component of the multiprotein chromatin-remodeling complexes SWI/SNF: SWI/SNF-A (BAF), SWI/SNF-B (PBAF) and related complexes. The canonical complex contains a catalytic subunit (either SMARCA4/BRG1/BAF190A or SMARCA2/BRM/BAF190B) and at least SMARCE1, ACTL6A/BAF53, SMARCC1/BAF155, SMARCC2/BAF170, and SMARCB1/SNF5/BAF47. Other subunits specific to each of the complexes may also be present permitting several possible combinations developmentally and tissue specific. Component of the SWI/SNF (GBAF) subcomplex, which includes at least BICRA or BICRAL (mutually exclusive), BRD9, SS18, the core BAF subunits, SMARCA2/BRM, SMARCA4/BRG1/BAF190A, ACTL6A/BAF53, SMARCC1/BAF155, and SMARCD1/BAF60A. Fairly ubiquitously expressed. Expressed in synovial sarcomas and in other human cell lines. The fusion genes SSXT-SSX1 and SSXT-SSX2 are expressed only in synovial sarcomas.

Its subcellular location is the nucleus. Functionally, appears to function synergistically with RBM14 as a transcriptional coactivator. Isoform 1 and isoform 2 function in nuclear receptor coactivation. Isoform 1 and isoform 2 function in general transcriptional coactivation. Component of SWI/SNF chromatin remodeling subcomplex GBAF that carries out key enzymatic activities, changing chromatin structure by altering DNA-histone contacts within a nucleosome in an ATP-dependent manner. The polypeptide is Protein SSXT (SS18) (Homo sapiens (Human)).